The sequence spans 313 residues: MLEKQSVNQKEQYNFNKLQKRLRRNVGQAIADFNMIEEGDRVMVCLSGGKDSYTMLDILQSLQKSAPINFSLIAVNLDQKQPGFPEDILPAYLDKQGVEYKIVEENTYGIVKEIIPEGKTTCSLCSRLRRGILYRTATELGATKIALGHHRDDILQTLFLNMFYGGKLKGMPPKLMSDDGKHIVIRPLAYCREKDIERFAVAREYPIIPCNLCGSQPNLQRQVIKDMLRDWDKQYPGRIETMFSAMQNVVPSHLNDHKLFDFKSITHDSDIIDGGDLAFDREALPLNPVGWQPEDDEDTEKRPPVRLDVLEIK.

The short motif at 47-52 (SGGKDS) is the PP-loop motif element. Cysteine 122, cysteine 125, and cysteine 213 together coordinate [4Fe-4S] cluster. The tract at residues 288–313 (PVGWQPEDDEDTEKRPPVRLDVLEIK) is disordered. The segment covering 299–313 (TEKRPPVRLDVLEIK) has biased composition (basic and acidic residues).

Belongs to the TtcA family. Homodimer. Mg(2+) serves as cofactor. The cofactor is [4Fe-4S] cluster.

The protein resides in the cytoplasm. The catalysed reaction is cytidine(32) in tRNA + S-sulfanyl-L-cysteinyl-[cysteine desulfurase] + AH2 + ATP = 2-thiocytidine(32) in tRNA + L-cysteinyl-[cysteine desulfurase] + A + AMP + diphosphate + H(+). It functions in the pathway tRNA modification. Catalyzes the ATP-dependent 2-thiolation of cytidine in position 32 of tRNA, to form 2-thiocytidine (s(2)C32). The sulfur atoms are provided by the cysteine/cysteine desulfurase (IscS) system. In Yersinia pseudotuberculosis serotype O:1b (strain IP 31758), this protein is tRNA-cytidine(32) 2-sulfurtransferase.